A 344-amino-acid chain; its full sequence is Protein-glutamate methylesterase/protein-glutamine glutaminase (344 aa).

The Response regulatory domain occupies 7 to 124 (RVLVVDDSAF…SLTFRQVAPE (118 aa)). D58 is subject to 4-aspartylphosphate. A CheB-type methylesterase domain is found at 154–344 (PAVSGKIVVI…KIPEKLIELV (191 aa)). Active-site residues include S166, H193, and D289.

The protein belongs to the CheB family. In terms of processing, phosphorylated by CheA. Phosphorylation of the N-terminal regulatory domain activates the methylesterase activity.

The protein localises to the cytoplasm. The enzyme catalyses [protein]-L-glutamate 5-O-methyl ester + H2O = L-glutamyl-[protein] + methanol + H(+). It catalyses the reaction L-glutaminyl-[protein] + H2O = L-glutamyl-[protein] + NH4(+). Involved in chemotaxis. Part of a chemotaxis signal transduction system that modulates chemotaxis in response to various stimuli. Catalyzes the demethylation of specific methylglutamate residues introduced into the chemoreceptors (methyl-accepting chemotaxis proteins or MCP) by CheR. Also mediates the irreversible deamidation of specific glutamine residues to glutamic acid. This is Protein-glutamate methylesterase/protein-glutamine glutaminase from Thermotoga maritima (strain ATCC 43589 / DSM 3109 / JCM 10099 / NBRC 100826 / MSB8).